The following is a 429-amino-acid chain: Glutamyl-tRNA reductase (429 aa).

Residues 49–52 (TCNR), serine 107, 112–114 (EPQ), and glutamine 118 contribute to the substrate site. Cysteine 50 acts as the Nucleophile in catalysis. 187-192 (GAGKTI) contacts NADP(+).

This sequence belongs to the glutamyl-tRNA reductase family. As to quaternary structure, homodimer.

The catalysed reaction is (S)-4-amino-5-oxopentanoate + tRNA(Glu) + NADP(+) = L-glutamyl-tRNA(Glu) + NADPH + H(+). The protein operates within porphyrin-containing compound metabolism; protoporphyrin-IX biosynthesis; 5-aminolevulinate from L-glutamyl-tRNA(Glu): step 1/2. Functionally, catalyzes the NADPH-dependent reduction of glutamyl-tRNA(Glu) to glutamate 1-semialdehyde (GSA). The protein is Glutamyl-tRNA reductase of Marinobacter nauticus (strain ATCC 700491 / DSM 11845 / VT8) (Marinobacter aquaeolei).